The sequence spans 159 residues: Putative viral CXC chemokine 2 (159 aa).

Cystine bridges form between Cys-50-Cys-77 and Cys-52-Cys-93.

The protein belongs to the intercrine alpha (chemokine CxC) family.

This chain is Putative viral CXC chemokine 2 (UL147), found in Human cytomegalovirus (strain Towne) (HHV-5).